A 226-amino-acid chain; its full sequence is Ribonuclease 3 (226 aa).

In terms of domain architecture, RNase III spans 7–129 (LPRLCRTLGY…IIGAIYLDSD (123 aa)). Position 42 (glutamate 42) interacts with Mg(2+). The active site involves aspartate 46. Residues aspartate 115 and glutamate 118 each coordinate Mg(2+). Residue glutamate 118 is part of the active site. Positions 156–226 (DAKTLLQEYL…AAQVLELLKK (71 aa)) constitute a DRBM domain.

Belongs to the ribonuclease III family. As to quaternary structure, homodimer. Requires Mg(2+) as cofactor.

It is found in the cytoplasm. The enzyme catalyses Endonucleolytic cleavage to 5'-phosphomonoester.. Its function is as follows. Digests double-stranded RNA. Involved in the processing of primary rRNA transcript to yield the immediate precursors to the large and small rRNAs (23S and 16S). Processes some mRNAs, and tRNAs when they are encoded in the rRNA operon. Processes pre-crRNA and tracrRNA of type II CRISPR loci if present in the organism. The protein is Ribonuclease 3 of Shewanella sp. (strain W3-18-1).